The primary structure comprises 190 residues: Putative 3-methyladenine DNA glycosylase (190 aa).

This sequence belongs to the DNA glycosylase MPG family.

The polypeptide is Putative 3-methyladenine DNA glycosylase (Deinococcus radiodurans (strain ATCC 13939 / DSM 20539 / JCM 16871 / CCUG 27074 / LMG 4051 / NBRC 15346 / NCIMB 9279 / VKM B-1422 / R1)).